The following is a 346-amino-acid chain: Sensor histidine kinase GraS (346 aa).

2 helical membrane-spanning segments follow: residues 15–35 (MNWI…SLID) and 43–63 (LFYI…LTYF). Residues 126–332 (EFVHDIKTPV…TVRLIFPLQN (207 aa)) enclose the Histidine kinase domain.

In terms of assembly, interacts with GraX.

The protein localises to the cell membrane. The catalysed reaction is ATP + protein L-histidine = ADP + protein N-phospho-L-histidine.. Its function is as follows. Member of the two-component regulatory system GraR/GraS involved in resistance against cationic antimicrobial peptides (CAMPs). Functions as a sensor protein kinase which phosphorylates GraR through the auxiliary protein GraX. In turn, GraR up-regulates many genes such as adhesins, exoproteins, transporters, toxins, and proteins involved in cell wall synthesis. Down-regulates the expression of many genes involved in RNA and amino acid synthesis or glycolysis. The polypeptide is Sensor histidine kinase GraS (graS) (Staphylococcus aureus (strain Mu50 / ATCC 700699)).